A 162-amino-acid chain; its full sequence is Ribose-5-phosphate isomerase B (162 aa).

Residues 11–12 (DH) and 70–74 (GSGNG) contribute to the D-ribulose 5-phosphate site. Catalysis depends on Glu75, which acts as the Proton acceptor. His102 acts as the Proton donor in catalysis. Residues Asn103, Arg113, Arg137, and Arg141 each coordinate D-ribulose 5-phosphate.

It belongs to the LacAB/RpiB family. Homodimer.

The enzyme catalyses aldehydo-D-ribose 5-phosphate = D-ribulose 5-phosphate. It participates in carbohydrate degradation; pentose phosphate pathway; D-ribose 5-phosphate from D-ribulose 5-phosphate (non-oxidative stage): step 1/1. Catalyzes the interconversion of ribulose-5-P and ribose-5-P. This is Ribose-5-phosphate isomerase B from Mycobacterium leprae (strain TN).